We begin with the raw amino-acid sequence, 120 residues long: Large ribosomal subunit protein uL18 (120 aa).

It belongs to the universal ribosomal protein uL18 family. Part of the 50S ribosomal subunit; part of the 5S rRNA/L5/L18/L25 subcomplex. Contacts the 5S and 23S rRNAs.

In terms of biological role, this is one of the proteins that bind and probably mediate the attachment of the 5S RNA into the large ribosomal subunit, where it forms part of the central protuberance. The sequence is that of Large ribosomal subunit protein uL18 from Paramagnetospirillum magneticum (strain ATCC 700264 / AMB-1) (Magnetospirillum magneticum).